A 187-amino-acid chain; its full sequence is Hypoxanthine/guanine phosphoribosyltransferase (187 aa).

This sequence belongs to the purine/pyrimidine phosphoribosyltransferase family. Archaeal HPRT subfamily. Homodimer.

The protein localises to the cytoplasm. The catalysed reaction is IMP + diphosphate = hypoxanthine + 5-phospho-alpha-D-ribose 1-diphosphate. It carries out the reaction GMP + diphosphate = guanine + 5-phospho-alpha-D-ribose 1-diphosphate. The protein operates within purine metabolism; IMP biosynthesis via salvage pathway; IMP from hypoxanthine: step 1/1. Its function is as follows. Catalyzes a salvage reaction resulting in the formation of IMP that is energically less costly than de novo synthesis. The protein is Hypoxanthine/guanine phosphoribosyltransferase of Methanopyrus kandleri (strain AV19 / DSM 6324 / JCM 9639 / NBRC 100938).